The sequence spans 257 residues: Type III pantothenate kinase (257 aa).

11–18 is a binding site for ATP; that stretch reads DSGNTAIK. Substrate-binding positions include tyrosine 96 and 103–106; that span reads GCDR. The active-site Proton acceptor is aspartate 105. Aspartate 125 provides a ligand contact to K(+). Threonine 128 is a binding site for ATP. Threonine 179 is a binding site for substrate.

It belongs to the type III pantothenate kinase family. As to quaternary structure, homodimer. The cofactor is NH4(+). K(+) serves as cofactor.

The protein resides in the cytoplasm. The enzyme catalyses (R)-pantothenate + ATP = (R)-4'-phosphopantothenate + ADP + H(+). The protein operates within cofactor biosynthesis; coenzyme A biosynthesis; CoA from (R)-pantothenate: step 1/5. Functionally, catalyzes the phosphorylation of pantothenate (Pan), the first step in CoA biosynthesis. The protein is Type III pantothenate kinase of Nitrosomonas eutropha (strain DSM 101675 / C91 / Nm57).